The primary structure comprises 124 residues: MIGVTLAVAVGGALGCLLRFATSNWISAHWPQHFYAATLAVNIAGCLLIGYLYGQFLLRPEVPLALRAGLIAGFLGGLTTFSSFSLDTLRLLESGQAPLAFSYLAFSVLGGLLATWAGLILTKL.

The next 4 helical transmembrane spans lie at 1–21 (MIGV…LRFA), 34–54 (FYAA…YLYG), 62–82 (VPLA…TTFS), and 101–121 (FSYL…GLIL). Na(+) contacts are provided by Gly76 and Thr79.

The protein belongs to the fluoride channel Fluc/FEX (TC 1.A.43) family.

The protein localises to the cell inner membrane. It carries out the reaction fluoride(in) = fluoride(out). Its activity is regulated as follows. Na(+) is not transported, but it plays an essential structural role and its presence is essential for fluoride channel function. Functionally, fluoride-specific ion channel. Important for reducing fluoride concentration in the cell, thus reducing its toxicity. The chain is Fluoride-specific ion channel FluC from Azotobacter vinelandii (strain DJ / ATCC BAA-1303).